A 741-amino-acid polypeptide reads, in one-letter code: Linoleate 9S-lipoxygenase (741 aa).

The 53-residue stretch at 1 to 53 (IPGAFYIKNFMQVEFYLKSLTLEDIPNHGTIHFICNSWIYNSKVYKSDRIFFA) folds into the PLAT domain. One can recognise a Lipoxygenase domain in the interval 56–741 (TYLPSETPAP…SEEGLTFRGI (686 aa)). Positions 108 to 144 (ALARPVLGGSTLPYPRRGRTGRPKTKKDPNSEKPSDF) are disordered. Basic residues predominate over residues 123–132 (RRGRTGRPKT). A compositionally biased stretch (basic and acidic residues) spans 133 to 144 (KKDPNSEKPSDF). The Fe cation site is built by His-407, His-412, His-598, and Asn-602.

It belongs to the lipoxygenase family. Monomer. Fe cation is required as a cofactor.

The protein localises to the cytoplasm. The catalysed reaction is (9Z,12Z)-octadecadienoate + O2 = (9S)-hydroperoxy-(10E,12Z)-octadecadienoate. The enzyme catalyses (9Z,12Z)-octadecadienoate + O2 = (13S)-hydroperoxy-(9Z,11E)-octadecadienoate. It carries out the reaction (9Z,12Z,15Z)-octadecatrienoate + O2 = (13S)-hydroperoxy-(9Z,11E,15Z)-octadecatrienoate. It participates in lipid metabolism; oxylipin biosynthesis. Plant lipoxygenase may be involved in a number of diverse aspects of plant physiology including growth and development, pest resistance, and senescence or responses to wounding. It catalyzes the hydroperoxidation of lipids containing a cis,cis-1,4-pentadiene structure. In Phaseolus vulgaris (Kidney bean), this protein is Linoleate 9S-lipoxygenase.